Here is a 460-residue protein sequence, read N- to C-terminus: Argininosuccinate lyase (460 aa).

This sequence belongs to the lyase 1 family. Argininosuccinate lyase subfamily.

The protein resides in the cytoplasm. It catalyses the reaction 2-(N(omega)-L-arginino)succinate = fumarate + L-arginine. The protein operates within amino-acid biosynthesis; L-arginine biosynthesis; L-arginine from L-ornithine and carbamoyl phosphate: step 3/3. This Sulfurimonas denitrificans (strain ATCC 33889 / DSM 1251) (Thiomicrospira denitrificans (strain ATCC 33889 / DSM 1251)) protein is Argininosuccinate lyase.